The chain runs to 92 residues: PqqA binding protein (92 aa).

The protein belongs to the PqqD family. Monomer. Interacts with PqqE.

The protein operates within cofactor biosynthesis; pyrroloquinoline quinone biosynthesis. Functionally, functions as a PqqA binding protein and presents PqqA to PqqE, in the pyrroloquinoline quinone (PQQ) biosynthetic pathway. The sequence is that of PqqA binding protein from Azotobacter vinelandii (strain DJ / ATCC BAA-1303).